A 368-amino-acid chain; its full sequence is Uroporphyrinogen decarboxylase (368 aa).

Residues 41 to 45 (RQAGR), D91, Y168, S223, and H345 each bind substrate.

It belongs to the uroporphyrinogen decarboxylase family. As to quaternary structure, homodimer.

It localises to the cytoplasm. The catalysed reaction is uroporphyrinogen III + 4 H(+) = coproporphyrinogen III + 4 CO2. The protein operates within porphyrin-containing compound metabolism; protoporphyrin-IX biosynthesis; coproporphyrinogen-III from 5-aminolevulinate: step 4/4. In terms of biological role, catalyzes the decarboxylation of four acetate groups of uroporphyrinogen-III to yield coproporphyrinogen-III. The protein is Uroporphyrinogen decarboxylase of Psychrobacter sp. (strain PRwf-1).